The chain runs to 398 residues: O-methyltransferase penC (398 aa).

Residue Asp-263 participates in S-adenosyl-L-methionine binding. His-305 serves as the catalytic Proton acceptor.

It belongs to the class I-like SAM-binding methyltransferase superfamily. Cation-independent O-methyltransferase family.

Its pathway is secondary metabolite biosynthesis. The protein operates within alkaloid biosynthesis. It functions in the pathway mycotoxin biosynthesis. O-methyltransferase; part of the gene cluster that mediates the biosynthesis of penigequinolones, potent insecticidal alkaloids that contain a highly modified 10-carbon prenyl group. The first stage is catalyzed by the nonribosomal peptide synthetase penN that condenses anthranilic acid and O-methyl-L-tyrosine to produce 4'-methoxycyclopeptin. 4'-methoxycyclopeptin is then converted to 4'-methoxydehydrocyclopeptin by the ketoglutarate-dependent dioxygenase penM through dehydrogenation to form a double bond between C-alpha and C-beta of the O-methyltyrosine side chain. PenM also converts its first product methoxydehydrocyclopeptin to 4'-methoxycyclopenin. The following conversion of 4'methoxycyclopenin into 4'-methoxyviridicatin is catalyzed by the cyclopenase penL. 4'-methoxyviridicatin is the precursor of quinolone natural products, and is further converted to quinolinone B. The prenyltransferase penI then catalyzes the canonical Friedel-Crafts alkylation of quinolinone B with dimethylallyl cation to yield dimethylallyl quinolone, which is subjected to FAD-dependent dehydrogenation by the FAD-linked oxidoreductase penH to yield conjugated aryl diene. The delta(3') double bond then serves as the site of the second alkylation with DMAPP catalyzed by the prenyltransferase penG to yield a carbenium ion intermediate, which can be attacked by H(2)O to yield a styrenyl quinolone containing a C3'-hydroxyprenyl chain, or undergo cyclization to yield yaequinolones J1 and J2. The conversion of the styrenyl quinolone into the tetrahydrofuran-containing yaequinolone C is performed by the FAD-dependent monooxygenase penE and involves epoxidation of the terminal C7'-C8' olefin, followed by epoxide ring opening initiated by the C3' hydroxyl group. The predicted cysteine hydrolase penJ acts as an epoxide hydrolase that enhances the rate of the 5-exo-tet cyclization step, increasing the yield of yaequinolone C. PenF catalyzes the cationic rearrangement of the epoxide formed by penE (before ring opening to produce yaequinolone C) into yaequinolone D. Finally, the short-chain dehydrogenase/reductase (SDR)-like reductase penD, catalyzes both the dehydration of yaequinolone D and the reduction of the resulting oxonium to yield penigequinolone. The chain is O-methyltransferase penC from Penicillium thymicola.